The chain runs to 125 residues: Small ribosomal subunit protein uS12m (125 aa).

It belongs to the universal ribosomal protein uS12 family.

It is found in the mitochondrion. Protein S12 is involved in the translation initiation step. The chain is Small ribosomal subunit protein uS12m (RPS12) from Brassica napus (Rape).